The chain runs to 198 residues: Ribonuclease HII (198 aa).

The RNase H type-2 domain maps to 9–198 (ITVAGADEAG…LLPDQLKIDF (190 aa)). D15, E16, and D107 together coordinate a divalent metal cation.

This sequence belongs to the RNase HII family. Requires Mn(2+) as cofactor. It depends on Mg(2+) as a cofactor.

It localises to the cytoplasm. It catalyses the reaction Endonucleolytic cleavage to 5'-phosphomonoester.. Functionally, endonuclease that specifically degrades the RNA of RNA-DNA hybrids. In Christiangramia forsetii (strain DSM 17595 / CGMCC 1.15422 / KT0803) (Gramella forsetii), this protein is Ribonuclease HII.